The chain runs to 212 residues: Uridine kinase (212 aa).

An ATP-binding site is contributed by 13 to 20 (GASASGKS).

This sequence belongs to the uridine kinase family.

Its subcellular location is the cytoplasm. The enzyme catalyses uridine + ATP = UMP + ADP + H(+). It catalyses the reaction cytidine + ATP = CMP + ADP + H(+). The protein operates within pyrimidine metabolism; CTP biosynthesis via salvage pathway; CTP from cytidine: step 1/3. Its pathway is pyrimidine metabolism; UMP biosynthesis via salvage pathway; UMP from uridine: step 1/1. This chain is Uridine kinase, found in Shewanella oneidensis (strain ATCC 700550 / JCM 31522 / CIP 106686 / LMG 19005 / NCIMB 14063 / MR-1).